A 339-amino-acid chain; its full sequence is Phenylalanine--tRNA ligase alpha subunit (339 aa).

E254 provides a ligand contact to Mg(2+).

It belongs to the class-II aminoacyl-tRNA synthetase family. Phe-tRNA synthetase alpha subunit type 1 subfamily. Tetramer of two alpha and two beta subunits. Mg(2+) serves as cofactor.

It is found in the cytoplasm. The catalysed reaction is tRNA(Phe) + L-phenylalanine + ATP = L-phenylalanyl-tRNA(Phe) + AMP + diphosphate + H(+). The chain is Phenylalanine--tRNA ligase alpha subunit from Dictyoglomus turgidum (strain DSM 6724 / Z-1310).